Reading from the N-terminus, the 95-residue chain is MEFYNIGDIMALKFTIEELSNQKRDTLGRNIDVTVFRLIRFMDLERYLGRGAHGVIYECGRELGLALNPKTVEDVVKFCEEYKIGKVEIVNKEPL.

This is an uncharacterized protein from Methanocaldococcus jannaschii (strain ATCC 43067 / DSM 2661 / JAL-1 / JCM 10045 / NBRC 100440) (Methanococcus jannaschii).